The following is a 437-amino-acid chain: Acyl-coenzyme A thioesterase 2, chloroplastic (437 aa).

The N-terminal 13 residues, 1-13 (MDLSSSPNHPITV), are a transit peptide targeting the chloroplast. HotDog ACOT-type domains lie at 89 to 211 (ILYN…RDSK) and 287 to 404 (RDTR…RPEA).

This sequence belongs to the acyl coenzyme A hydrolase family. Mostly expressed at low levels in glandular trichomes (lupulin glands), and, to a lower extent, in stems, leaves, flowers and cones.

The protein localises to the plastid. It is found in the chloroplast. Acyl-CoA thioesterases are a group of enzymes that catalyze the hydrolysis of acyl-CoAs to the free fatty acid and coenzyme A (CoASH), providing the potential to regulate intracellular levels of acyl-CoAs, free fatty acids and CoASH. The sequence is that of Acyl-coenzyme A thioesterase 2, chloroplastic from Humulus lupulus (European hop).